The chain runs to 30 residues: Varv peptide G (30 aa).

Positions 1–30 (GVPVCGETCFGGTCNTPGCSCDPWPVCSRN) form a cross-link, cyclopeptide (Gly-Asn). 3 disulfide bridges follow: cysteine 5-cysteine 19, cysteine 9-cysteine 21, and cysteine 14-cysteine 27.

In terms of processing, this is a cyclic peptide.

Its function is as follows. Probably participates in a plant defense mechanism. The chain is Varv peptide G from Viola arvensis (European field pansy).